Consider the following 356-residue polypeptide: MFIDSVKITLASGDGGKGAVSFRREKHVPLGGPDGGDGGNGGDIIFVCDNNTHTLVNFKGKRELRAQNGAGGMGRNKNGKKGENLELIVPEGTQVIDAQTNEILLDLTEEGQRELFLKGGKGGLGNTHFKHATNQRPDYAQPGIKGESRLVRLELKLIADVGLVGFPNVGKSTLISVVSNAKPEIANYEFTTLTPKLGLVDVNEYNSFVMADIPGIIEGASGGKGLGLAFLKHIERTSFLLFVLDPMRQMPLKEQFIVLRKELEKFSNELFGRKFGIMISKSDSVRLGEEFAEQIALNINELDNYLKEINNPQSFLIKVSSLEKTGLKELKFMLLEEIKTLRNNKKNFNNLGSVLY.

Positions 1–158 (MFIDSVKITL…RLVRLELKLI (158 aa)) constitute an Obg domain. The 181-residue stretch at 159 to 339 (ADVGLVGFPN…LKFMLLEEIK (181 aa)) folds into the OBG-type G domain. Residues 165-172 (GFPNVGKS), 190-194 (FTTLT), 212-215 (DIPG), 280-283 (SKSD), and 320-322 (SSL) contribute to the GTP site. 2 residues coordinate Mg(2+): S172 and T192.

This sequence belongs to the TRAFAC class OBG-HflX-like GTPase superfamily. OBG GTPase family. As to quaternary structure, monomer. Mg(2+) is required as a cofactor.

Its subcellular location is the cytoplasm. In terms of biological role, an essential GTPase which binds GTP, GDP and possibly (p)ppGpp with moderate affinity, with high nucleotide exchange rates and a fairly low GTP hydrolysis rate. Plays a role in control of the cell cycle, stress response, ribosome biogenesis and in those bacteria that undergo differentiation, in morphogenesis control. This is GTPase Obg from Campylobacter jejuni subsp. jejuni serotype O:23/36 (strain 81-176).